The sequence spans 142 residues: Small ribosomal subunit protein bS6 (142 aa).

The span at 113-136 (IKKEPREPREPRAPREPKAEKIEE) shows a compositional bias: basic and acidic residues. Residues 113–142 (IKKEPREPREPRAPREPKAEKIEEQTFSEE) form a disordered region.

It belongs to the bacterial ribosomal protein bS6 family.

Its function is as follows. Binds together with bS18 to 16S ribosomal RNA. This is Small ribosomal subunit protein bS6 from Campylobacter curvus (strain 525.92).